The sequence spans 361 residues: Aminomethyltransferase (361 aa).

Belongs to the GcvT family. The glycine cleavage system is composed of four proteins: P, T, L and H.

The enzyme catalyses N(6)-[(R)-S(8)-aminomethyldihydrolipoyl]-L-lysyl-[protein] + (6S)-5,6,7,8-tetrahydrofolate = N(6)-[(R)-dihydrolipoyl]-L-lysyl-[protein] + (6R)-5,10-methylene-5,6,7,8-tetrahydrofolate + NH4(+). In terms of biological role, the glycine cleavage system catalyzes the degradation of glycine. This Herpetosiphon aurantiacus (strain ATCC 23779 / DSM 785 / 114-95) protein is Aminomethyltransferase.